Here is a 90-residue protein sequence, read N- to C-terminus: Putative beta-neurotoxin RjAa14F (90 aa).

An N-terminal signal peptide occupies residues 1–18 (MKILIFIIASFMLIGVEC). An LCN-type CS-alpha/beta domain is found at 19 to 89 (KEGYPTNSEG…VWDPNNNKCV (71 aa)). Intrachain disulfides connect Cys-29/Cys-88, Cys-33/Cys-62, Cys-40/Cys-69, and Cys-44/Cys-71.

It belongs to the long (4 C-C) scorpion toxin superfamily. Sodium channel inhibitor family. Beta subfamily. As to expression, expressed by the venom gland.

The protein resides in the secreted. Beta toxins bind voltage-independently at site-4 of sodium channels (Nav) and shift the voltage of activation toward more negative potentials thereby affecting sodium channel activation and promoting spontaneous and repetitive firing. This is Putative beta-neurotoxin RjAa14F from Rhopalurus junceus (Caribbean blue scorpion).